A 78-amino-acid chain; its full sequence is Large ribosomal subunit protein bL28 (78 aa).

This sequence belongs to the bacterial ribosomal protein bL28 family.

In Prochlorococcus marinus (strain AS9601), this protein is Large ribosomal subunit protein bL28.